A 236-amino-acid polypeptide reads, in one-letter code: MKINILTLFPEMFDIFKHSIIGRARENGFLHIETVNIRDYTLNKHKKVDDYPYGGGAGMVMTPQPIVDAIKAVKEKNKGKVIFLGPRGKTFNQEMAKELSKEEELIFVCGHYEGIDQRIYKYFDLEISLGDFVLTGGEMACIPVIDSISRLVPGVLGSEESFQDESYYDGTLEYPQYTRPFEFEGEKVPEVLISGHHENIRKWRRKESLLITKERRPDMFEKIKLSKEDIKLLKSK.

Residues Gly-110 and 129–134 contribute to the S-adenosyl-L-methionine site; that span reads LGDFVL.

The protein belongs to the RNA methyltransferase TrmD family. Homodimer.

Its subcellular location is the cytoplasm. The enzyme catalyses guanosine(37) in tRNA + S-adenosyl-L-methionine = N(1)-methylguanosine(37) in tRNA + S-adenosyl-L-homocysteine + H(+). Functionally, specifically methylates guanosine-37 in various tRNAs. The chain is tRNA (guanine-N(1)-)-methyltransferase from Clostridium perfringens (strain SM101 / Type A).